A 670-amino-acid chain; its full sequence is Polar flagellar hook-associated protein 2 (670 aa).

The segment at 226 to 300 is disordered; the sequence is PLQAPQQPDQ…RSSLRPEERI (75 aa). Over residues 257 to 266 the composition is skewed to acidic residues; it reads AQDDAQDDAS. Over residues 272 to 283 the composition is skewed to low complexity; it reads AAGAEAAKAGQE. Residues 284–300 show a composition bias toward basic and acidic residues; sequence AIDKANQRSSLRPEERI. Residues 342 to 428 are a coiled coil; that stretch reads GTLTDSYVTT…AQSSFEEYLG (87 aa).

Belongs to the FliD family. In terms of assembly, homopentamer.

The protein resides in the secreted. It is found in the bacterial flagellum. In terms of biological role, required for the morphogenesis and for the elongation of the flagellar filament by facilitating polymerization of the flagellin monomers at the tip of growing filament. Forms a capping structure, which prevents flagellin subunits (transported through the central channel of the flagellum) from leaking out without polymerization at the distal end. Important for swimming motility. This is Polar flagellar hook-associated protein 2 (fliDP) from Vibrio parahaemolyticus serotype O3:K6 (strain RIMD 2210633).